The chain runs to 274 residues: MSKKAVPPIVKAQYELYNRKLNRAIKVSGSQKKLDASFVGFSESSNPETGKPHADMSMSAKVKRVNTWLKNFDREYWDNQFASKPIPRPAKQVLKGSSSKSQQRDEGEVVFTRKDSQKSVRTVSYWVCTPEKSMKPLKYKEDENVVEVTFNDLAAQKAGDKLVSILLEINVVGGAVDDKGRVAVLEKDAAVTVDYLLGSPYEAINLVSGLNKINFRSMTDVVDSIPSLLNERKVCVFQNDDSSSFYIRKWANFLQEVSAVLPVGTGKSSTIVLT.

The interval 88–113 (RPAKQVLKGSSSKSQQRDEGEVVFTR) is disordered. The segment covering 102–113 (QQRDEGEVVFTR) has biased composition (basic and acidic residues).

Its subcellular location is the virion. Its function is as follows. Capsid protein self-assembles to form a capsid about 33 nm in diameter. The capsid encapsulates two genomic RNAs as well as a third, subgenomic RNA (RNA3) (Potential). The chain is Capsid protein from Raspberry bushy dwarf virus (isolate Malling Jewel raspberry/R15) (RBDV).